Consider the following 620-residue polypeptide: Notoamide biosynthesis transcriptional activator notL' (620 aa).

A disordered region spans residues 1 to 26 (MPPSSKSRRLPPAASDSAASDAQKRR). Positions 33-59 (CSACKARKLKCTGAPPCANCVKSRIEC) form a DNA-binding region, zn(2)-C6 fungal-type. The segment at 591–620 (ETGAFFLDPDQPSGNSTPIKSETPEGTAIS) is disordered.

The protein localises to the nucleus. Its function is as follows. Transcription factor that probably regulates the expression of the gene cluster that mediates the biosynthesis of notoamide, a fungal indole alkaloid that belongs to a family of natural products containing a characteristic bicyclo[2.2.2]diazaoctane core. The chain is Notoamide biosynthesis transcriptional activator notL' from Aspergillus versicolor.